The chain runs to 565 residues: Calcium-dependent protein kinase 21 (565 aa).

Gly2 carries N-myristoyl glycine lipidation. The segment at 28 to 55 is disordered; it reads PVPDAEAASPRKDGVDGDGDDVRGGGGG. The segment covering 36–50 has biased composition (basic and acidic residues); the sequence is SPRKDGVDGDGDDVR. The Protein kinase domain occupies 77 to 358; sequence YVLGKELGRG…AKQVLEHPWL (282 aa). Residues 83-91 and Lys106 each bind ATP; that span reads LGRGEFGVT. Asp224 functions as the Proton acceptor in the catalytic mechanism. The autoinhibitory domain stretch occupies residues 364 to 394; it reads APNVSLGDAVRARLQQFSAMNKFKKKALGVV. 4 consecutive EF-hand domains span residues 401-436, 437-472, 473-500, and 504-539; these read EEVDKYVQMFHHMDKDKNGHLSLDELLEGLHINGQP, VPEPEIRMLLEAADTDGNGTLDCDEFVTVSVHLKKM, SNDEYLAAAFNYFDKDGSGFIELDELRE, and PNEQAILEILRDVDTDKDGRISYQEFELMMKSGADW. Ca(2+) is bound by residues Asp414, Asp416, Asn418, His420, Glu425, Asp450, Asp452, Asn454, Thr456, Glu461, Asp486, Asp488, Ser490, Glu497, Asp517, Asp519, Asp521, Arg523, and Glu528.

This sequence belongs to the protein kinase superfamily. Ser/Thr protein kinase family. CDPK subfamily. As to expression, expressed in spikelets and developing seeds.

Its subcellular location is the membrane. It carries out the reaction L-seryl-[protein] + ATP = O-phospho-L-seryl-[protein] + ADP + H(+). The enzyme catalyses L-threonyl-[protein] + ATP = O-phospho-L-threonyl-[protein] + ADP + H(+). Activated by calcium. Autophosphorylation may play an important role in the regulation of the kinase activity. In terms of biological role, may play a role in signal transduction pathways that involve calcium as a second messenger. Functions in signal transduction pathways that positively regulate responses to abscisic acid (ABA) and salt stress. This Oryza sativa subsp. japonica (Rice) protein is Calcium-dependent protein kinase 21.